We begin with the raw amino-acid sequence, 413 residues long: Monacolin J acid methylbutanoyltransferase (413 aa).

Arg73 contacts monacolin J. Ser76 functions as the Acyl-ester intermediate in the catalytic mechanism. Monacolin J contacts are provided by Arg173, Tyr188, and Tyr258. Residue Gly366 coordinates 2-methylbutanoate. Residues Glu388 and Trp390 each coordinate monacolin J.

This sequence belongs to the class-A beta-lactamase family. As to quaternary structure, interacts with LovF.

It carries out the reaction monacolin J carboxylate + (S)-2-methylbutanoyl-[2-methylbutanoate polyketide synthase] = lovastatin carboxylate + holo-[2-methylbutanoate polyketide synthase]. It functions in the pathway polyketide biosynthesis; lovastatin biosynthesis. Its function is as follows. Monacolin J acid methylbutanoyltransferase; part of the gene cluster that mediates the biosynthesis of lovastatin (also known as mevinolin, mevacor or monacolin K), a hypolipidemic inhibitor of (3S)-hydroxymethylglutaryl-coenzyme A (HMG-CoA) reductase (HMGR). The first step in the biosynthesis of lovastatin is the production of dihydromonacolin L acid by the lovastatin nonaketide synthase lovB and the trans-acting enoyl reductase lovC via condensation of one acetyl-CoA unit and 8 malonyl-CoA units. Dihydromonacolin L acid is released from lovB by the thioesterase lovG. Next, dihydromonacolin L acid is oxidized by the dihydromonacolin L monooxygenase lovA twice to form monacolin J acid. The 2-methylbutyrate moiety of lovastatin is synthesized by the lovastatin diketide synthase lovF via condensation of one acetyl-CoA unit and one malonyl-CoA unit. Finally, the covalent attachment of this moiety to monacolin J acid is catalyzed by the transesterase lovD to yield lovastatin. LovD has broad substrate specificity and can also convert monacolin J to simvastatin using alpha-dimethylbutanoyl-S-methyl-3-mercaptopropionate (DMB-S-MMP) as the thioester acyl donor, and can also catalyze the reverse reaction and function as hydrolase in vitro. LovD has much higher activity with LovF-bound 2-methylbutanoate than with free diketide substrates. This chain is Monacolin J acid methylbutanoyltransferase, found in Aspergillus terreus.